Consider the following 301-residue polypeptide: Tyrosine recombinase XerC (301 aa).

In terms of domain architecture, Core-binding (CB) spans 1–85 (MELISLFKQY…ALRSFYRFLV (85 aa)). The Tyr recombinase domain maps to 106–292 (KLPHFFYEKE…TKEKLQESYR (187 aa)). Residues arginine 147, lysine 171, histidine 244, arginine 247, and histidine 270 contribute to the active site. Residue tyrosine 279 is the O-(3'-phospho-DNA)-tyrosine intermediate of the active site.

It belongs to the 'phage' integrase family. XerC subfamily. As to quaternary structure, forms a cyclic heterotetrameric complex composed of two molecules of XerC and two molecules of XerD.

The protein localises to the cytoplasm. Its function is as follows. Site-specific tyrosine recombinase, which acts by catalyzing the cutting and rejoining of the recombining DNA molecules. The XerC-XerD complex is essential to convert dimers of the bacterial chromosome into monomers to permit their segregation at cell division. It also contributes to the segregational stability of plasmids. This chain is Tyrosine recombinase XerC, found in Pediococcus pentosaceus (strain ATCC 25745 / CCUG 21536 / LMG 10740 / 183-1w).